The chain runs to 34 residues: Mu-theraphotoxin-Pspp1 (34 aa).

3 disulfide bridges follow: C2/C17, C9/C22, and C16/C29. A Phenylalanine amide modification is found at F34.

The protein belongs to the neurotoxin 10 (Hwtx-1) family. Expressed by the venom gland.

It localises to the secreted. In terms of biological role, voltage-gated sodium channel inhibitor. It is unclear if it selectively inhibits Nav1.7/SCN9A or shows similar potency on all sodium channels tested. According to Escoubas et al., 2006 and Nicolas et al., 2019, it is selective over Nav1.7/SCN9A (90% inhibition at 1 uM), versus Nav1.4 and Nav1.6 (35% inhibition), and shows a small inhibition on all other sodium channels (except Nav1.8/SCN10A). According to Goncalves et al., 2019, it shows a similar inhibition on almost all sodium channels tested (Nav1.1/SCN1A (IC(50)=280.3 nM), Nav1.2/SCN2A (IC(50)=73.7 nM), Nav1.3/SCN3A (IC(50)=201.5 nM), Nav1.4/SCN4A (IC(50)&gt;2100 nM), Nav1.5/SCN5A (IC(50)=710.6 nM), Nav1.6/SCN8A (IC(50)=491.2 nM), and Nav1.7/SCN9A (IC(50)=254.3-260 nM)), except Nav1.8/SCN10A. The voltage-dependence of steady-state Nav1.7/SCN9A channel activation and inactivation are not affected, suggesting that is does not act as a gating-modifier toxin but rather blocks or impedes ion flux through the channel pore. The toxin effect is partial and poorly reversible. In addition to its inhibition to sodium channels, it also shows a small inhibition on rat Kv3.4/KCNC4 potassium channels (20% inhibition at 1 uM). In vivo, when tested on pain models, it shows analgesic activity. The protein is Mu-theraphotoxin-Pspp1 of Phlogiellus sp. (Tarantula).